The primary structure comprises 1105 residues: Integrator complex subunit 2 (1105 aa).

A helical membrane pass occupies residues 822-842 (FVFCSPYLLMILLRILKGSLA).

This sequence belongs to the Integrator subunit 2 family. In terms of assembly, belongs to the multiprotein complex Integrator, at least composed of IntS1, IntS2, IntS3, IntS4, omd/IntS5, IntS6, defl/IntS7, IntS8, IntS9, IntS10, IntS11, IntS12, asun/IntS13, IntS14 and IntS15. The core complex associates with protein phosphatase 2A subunits mts/PP2A and Pp2A-29B, to form the Integrator-PP2A (INTAC) complex.

It is found in the nucleus membrane. Its subcellular location is the nucleus. Its function is as follows. Component of the integrator complex, a multiprotein complex that terminates RNA polymerase II (Pol II) transcription in the promoter-proximal region of genes. The integrator complex provides a quality checkpoint during transcription elongation by driving premature transcription termination of transcripts that are unfavorably configured for transcriptional elongation: the complex terminates transcription by (1) catalyzing dephosphorylation of the C-terminal domain (CTD) of Pol II subunit Polr2A/Rbp1 and Spt5, and (2) degrading the exiting nascent RNA transcript via endonuclease activity. The integrator complex is also involved in the 3'-end processing of the U7 snRNA, and also the spliceosomal snRNAs U1, U2, U4 and U5. This chain is Integrator complex subunit 2, found in Drosophila melanogaster (Fruit fly).